Consider the following 408-residue polypeptide: NADH-quinone oxidoreductase subunit H (408 aa).

9 helical membrane passes run 18 to 38 (LAKA…AILI), 84 to 104 (PIYL…FSVI), 124 to 144 (LPVA…GIVL), 165 to 185 (VVSY…YAGT), 198 to 218 (TWFV…MVGE), 261 to 281 (SALA…FNLI), 288 to 308 (WWPL…YFWL), 321 to 341 (MALG…VVAI), and 353 to 373 (WAAW…WGLA). Residues 381–408 (VQPPPPQSTGAYPVPPLPSVGTKETADA) are disordered. Positions 382 to 398 (QPPPPQSTGAYPVPPLP) are enriched in pro residues.

The protein belongs to the complex I subunit 1 family. In terms of assembly, NDH-1 is composed of 14 different subunits. Subunits NuoA, H, J, K, L, M, N constitute the membrane sector of the complex.

It localises to the cell membrane. The enzyme catalyses a quinone + NADH + 5 H(+)(in) = a quinol + NAD(+) + 4 H(+)(out). NDH-1 shuttles electrons from NADH, via FMN and iron-sulfur (Fe-S) centers, to quinones in the respiratory chain. The immediate electron acceptor for the enzyme in this species is believed to be menaquinone. Couples the redox reaction to proton translocation (for every two electrons transferred, four hydrogen ions are translocated across the cytoplasmic membrane), and thus conserves the redox energy in a proton gradient. This subunit may bind ubiquinone. The chain is NADH-quinone oxidoreductase subunit H from Mycolicibacterium smegmatis (strain ATCC 700084 / mc(2)155) (Mycobacterium smegmatis).